The sequence spans 383 residues: Xylose/arabinose import ATP-binding protein XacK (383 aa).

Residues 4–240 (LTLDDVTKVY…PNNLFVAGFI (237 aa)) enclose the ABC transporter domain. 41 to 48 (GPSGCGKS) is a binding site for ATP.

This sequence belongs to the ABC transporter superfamily. Carbohydrate uptake transporter-1 (CUT1) (TC 3.A.1.1) family. As to quaternary structure, the complex is composed of two ATP-binding proteins (XacJ and XacK), two transmembrane proteins (XacH and XacI) and a solute-binding protein (XacG).

The protein resides in the cell membrane. The enzyme catalyses D-xylose(out) + ATP + H2O = D-xylose(in) + ADP + phosphate + H(+). It carries out the reaction L-arabinose(out) + ATP + H2O = L-arabinose(in) + ADP + phosphate + H(+). Functionally, part of the ABC transporter complex XacGHIJK involved in the uptake of xylose and arabinose. Responsible for energy coupling to the transport system. The chain is Xylose/arabinose import ATP-binding protein XacK from Haloferax volcanii (strain ATCC 29605 / DSM 3757 / JCM 8879 / NBRC 14742 / NCIMB 2012 / VKM B-1768 / DS2) (Halobacterium volcanii).